A 249-amino-acid chain; its full sequence is GTP cyclohydrolase III (249 aa).

This sequence belongs to the archaeal-type GTP cyclohydrolase family.

The catalysed reaction is GTP + 3 H2O = 2-amino-5-formylamino-6-(5-phospho-D-ribosylamino)pyrimidin-4(3H)-one + 2 phosphate + 2 H(+). Its function is as follows. Catalyzes the formation of 2-amino-5-formylamino-6-ribofuranosylamino-4(3H)-pyrimidinone ribonucleotide monophosphate and inorganic phosphate from GTP. Also has an independent pyrophosphate phosphohydrolase activity. The polypeptide is GTP cyclohydrolase III (Methanothermobacter thermautotrophicus (strain ATCC 29096 / DSM 1053 / JCM 10044 / NBRC 100330 / Delta H) (Methanobacterium thermoautotrophicum)).